Here is a 657-residue protein sequence, read N- to C-terminus: WD repeat-containing protein 70 (657 aa).

Disordered stretches follow at residues 1-21 (MEHSGTSEVTGADTAGPDPQL) and 43-172 (FEQT…PVQR). Residues 45–78 (QTRRTAVERSRKTLEAREKEEEMNREKELRKQIE) are compositionally biased toward basic and acidic residues. The segment covering 82–105 (PAPSSSSAARERSQSSCRDTSSSD) has biased composition (low complexity). Composition is skewed to acidic residues over residues 106-119 (SESDDSSDSSDDEL) and 150-168 (EEGEDDDDDELDDEGEEDN). WD repeat units follow at residues 183-222 (HGTKTVSALGLDPSGARLVTGGYDYDVKFWDFAGMDASFK), 230-271 (CECH…ECIK), 284-324 (GHTA…KQKS), 333-372 (GKKVIPTTCTYSRDGNLVAAACQNGSIQIWDRNLTVHPKF), 379-418 (DPGTDTSCVAFSYDGNVLASRGGDDTLKLWDVRQFNKPLF), 424-469 (PTLF…RVYE), and 472-511 (ITDASVVRCLWHPKLNQIMVGTGNGLAKVYYDPNKSQRGA). A Glycyl lysine isopeptide (Lys-Gly) (interchain with G-Cter in SUMO2) cross-link involves residue lysine 299. Position 455 is an N6-acetyllysine (lysine 455). Positions 543–568 (REPRQRSTRKQLEKDRLDPLKSHKPE) are enriched in basic and acidic residues. The interval 543 to 584 (REPRQRSTRKQLEKDRLDPLKSHKPEPPVAGPGRGGRVGTHG) is disordered. Over residues 574 to 584 (PGRGGRVGTHG) the composition is skewed to gly residues. The residue at position 582 (threonine 582) is a Phosphothreonine. Residues lysine 593 and lysine 599 each participate in a glycyl lysine isopeptide (Lys-Gly) (interchain with G-Cter in SUMO2) cross-link. Phosphoserine is present on residues serine 624 and serine 641. Residues 634 to 657 (TMFAQVESDDEESKNEPEWKKRKI) form a disordered region. A compositionally biased stretch (basic and acidic residues) spans 647-657 (KNEPEWKKRKI).

It belongs to the WD repeat GAD-1 family.

The chain is WD repeat-containing protein 70 (Wdr70) from Mus musculus (Mouse).